We begin with the raw amino-acid sequence, 481 residues long: Probable cytosol aminopeptidase (481 aa).

Positions 247 and 252 each coordinate Mn(2+). Lys-259 is a catalytic residue. Positions 270, 329, and 331 each coordinate Mn(2+). Arg-333 is a catalytic residue.

The protein belongs to the peptidase M17 family. Requires Mn(2+) as cofactor.

Its subcellular location is the cytoplasm. It carries out the reaction Release of an N-terminal amino acid, Xaa-|-Yaa-, in which Xaa is preferably Leu, but may be other amino acids including Pro although not Arg or Lys, and Yaa may be Pro. Amino acid amides and methyl esters are also readily hydrolyzed, but rates on arylamides are exceedingly low.. It catalyses the reaction Release of an N-terminal amino acid, preferentially leucine, but not glutamic or aspartic acids.. Its function is as follows. Presumably involved in the processing and regular turnover of intracellular proteins. Catalyzes the removal of unsubstituted N-terminal amino acids from various peptides. This Clostridium tetani (strain Massachusetts / E88) protein is Probable cytosol aminopeptidase.